Here is a 121-residue protein sequence, read N- to C-terminus: MARIAGVDLPRDKRIVIGLTYIFGIGNTTAQKILKDAEVSEDIRVRDLTADQEDKIRAEVDNYLVEGDLRRTVSLNIKRLQEIGSYRGMRHRRGLPVRGQHTKNNARTRKGKKVSIAGRKK.

Residues 89–121 (MRHRRGLPVRGQHTKNNARTRKGKKVSIAGRKK) are disordered.

The protein belongs to the universal ribosomal protein uS13 family. As to quaternary structure, part of the 30S ribosomal subunit. Forms a loose heterodimer with protein S19. Forms two bridges to the 50S subunit in the 70S ribosome.

Located at the top of the head of the 30S subunit, it contacts several helices of the 16S rRNA. In the 70S ribosome it contacts the 23S rRNA (bridge B1a) and protein L5 of the 50S subunit (bridge B1b), connecting the 2 subunits; these bridges are implicated in subunit movement. Contacts the tRNAs in the A and P-sites. In Pediococcus pentosaceus (strain ATCC 25745 / CCUG 21536 / LMG 10740 / 183-1w), this protein is Small ribosomal subunit protein uS13.